The sequence spans 97 residues: uncharacterized protein (97 aa).

Positions 38-97 (TSPPDWNKFSGKVSINEPTTSKSKSKSTSTSTSTSTSTSTSTSTSSSTSSTSSTTSSINK) are disordered. The span at 56 to 97 (TTSKSKSKSTSTSTSTSTSTSTSTSTSSSTSSTSSTTSSINK) shows a compositional bias: low complexity.

This is an uncharacterized protein from Dictyostelium discoideum (Social amoeba).